The primary structure comprises 244 residues: Uridylate kinase (244 aa).

17–20 (KVSG) serves as a coordination point for ATP. Positions 25–30 (GEKGFG) are involved in allosteric activation by GTP. A UMP-binding site is contributed by G59. ATP-binding residues include G60 and R64. Residues D80 and 141–148 (VGNPFFTT) each bind UMP. Residues T168, Q169, Y174, and D177 each coordinate ATP.

The protein belongs to the UMP kinase family. Homohexamer.

It localises to the cytoplasm. It catalyses the reaction UMP + ATP = UDP + ADP. Its pathway is pyrimidine metabolism; CTP biosynthesis via de novo pathway; UDP from UMP (UMPK route): step 1/1. Allosterically activated by GTP. Inhibited by UTP. Functionally, catalyzes the reversible phosphorylation of UMP to UDP. This is Uridylate kinase from Ehrlichia canis (strain Jake).